Consider the following 142-residue polypeptide: Deoxyuridine 5'-triphosphate nucleotidohydrolase (142 aa).

Substrate contacts are provided by residues 62–64 (RSG), asparagine 75, and 79–81 (TID).

This sequence belongs to the dUTPase family. Requires Mg(2+) as cofactor.

It catalyses the reaction dUTP + H2O = dUMP + diphosphate + H(+). The protein operates within pyrimidine metabolism; dUMP biosynthesis; dUMP from dCTP (dUTP route): step 2/2. This enzyme is involved in nucleotide metabolism: it produces dUMP, the immediate precursor of thymidine nucleotides and it decreases the intracellular concentration of dUTP so that uracil cannot be incorporated into DNA. The sequence is that of Deoxyuridine 5'-triphosphate nucleotidohydrolase from Crocosphaera subtropica (strain ATCC 51142 / BH68) (Cyanothece sp. (strain ATCC 51142)).